A 569-amino-acid polypeptide reads, in one-letter code: Urease subunit alpha (569 aa).

Residues 131 to 569 form the Urease domain; that stretch reads GGIDTHIHFI…LPLAQRYLLL (439 aa). Ni(2+)-binding residues include histidine 136, histidine 138, and lysine 219. Lysine 219 bears the N6-carboxylysine mark. Histidine 221 lines the substrate pocket. The Ni(2+) site is built by histidine 248 and histidine 274. Residue histidine 322 is the Proton donor of the active site. A Ni(2+)-binding site is contributed by aspartate 362.

This sequence belongs to the metallo-dependent hydrolases superfamily. Urease alpha subunit family. In terms of assembly, heterotrimer of UreA (gamma), UreB (beta) and UreC (alpha) subunits. Three heterotrimers associate to form the active enzyme. Ni cation serves as cofactor. Carboxylation allows a single lysine to coordinate two nickel ions.

It localises to the cytoplasm. The catalysed reaction is urea + 2 H2O + H(+) = hydrogencarbonate + 2 NH4(+). It participates in nitrogen metabolism; urea degradation; CO(2) and NH(3) from urea (urease route): step 1/1. In Synechococcus sp. (strain WH7805), this protein is Urease subunit alpha.